A 440-amino-acid polypeptide reads, in one-letter code: L-seryl-tRNA(Sec) selenium transferase (440 aa).

Lysine 282 bears the N6-(pyridoxal phosphate)lysine mark.

Belongs to the SelA family. Requires pyridoxal 5'-phosphate as cofactor.

It is found in the cytoplasm. The enzyme catalyses L-seryl-tRNA(Sec) + selenophosphate + H(+) = L-selenocysteinyl-tRNA(Sec) + phosphate. It participates in aminoacyl-tRNA biosynthesis; selenocysteinyl-tRNA(Sec) biosynthesis; selenocysteinyl-tRNA(Sec) from L-seryl-tRNA(Sec) (bacterial route): step 1/1. Its function is as follows. Converts seryl-tRNA(Sec) to selenocysteinyl-tRNA(Sec) required for selenoprotein biosynthesis. This is L-seryl-tRNA(Sec) selenium transferase from Campylobacter jejuni subsp. jejuni serotype O:6 (strain 81116 / NCTC 11828).